Reading from the N-terminus, the 356-residue chain is MVDAAVLAKLEEGYAKLAASDSKSLLKKYLTKEVFDNLKNKVTPTFKSTLLDVIQSGLENHDSGVGIYAPDAEAYTVFADLFDPIIEDYHGGFKKTDKHPASNFGDVSTFGNVDPTNEYVISTRVRCGRSMQGYPFNPCLTEAQYKEMESKVSSTLSGLEGELKGKFYPLTGMEKAVQQQLIDDHFLFKEGDRFLQAANACRFWPSGRGIYHNDAKTFLVWCNEEDHLRIISMQQGGDLGQIYKRLVTAVNEIEKRVPFSHDDRLGFLTFCPTNLGTTIRASVHIKVPKLASNKAKLEEVAAKYNLQVRGTRGEHTEAEGGVYDISNKRRMGLTEFEAVKEMYDGITELIKLEKSL.

The 86-residue stretch at 6–91 (VLAKLEEGYA…FDPIIEDYHG (86 aa)) folds into the Phosphagen kinase N-terminal domain. A substrate-binding site is contributed by 64–68 (GVGIY). In terms of domain architecture, Phosphagen kinase C-terminal spans 119–356 (YVISTRVRCG…TELIKLEKSL (238 aa)). ATP-binding positions include 122-126 (STRVR) and histidine 185. Glutamate 225 contributes to the substrate binding site. Position 229 (arginine 229) interacts with ATP. Cysteine 271 is a substrate binding site. Residues 280–284 (RASVH) and 309–314 (RGTRGE) each bind ATP. Glutamate 314 is a binding site for substrate.

It belongs to the ATP:guanido phosphotransferase family.

It carries out the reaction L-arginine + ATP = N(omega)-phospho-L-arginine + ADP + H(+). This Drosophila melanogaster (Fruit fly) protein is Arginine kinase 1.